The sequence spans 297 residues: tRNA dimethylallyltransferase (297 aa).

15–22 (GPTASGKS) is a binding site for ATP. 17 to 22 (TASGKS) contacts substrate. Interaction with substrate tRNA regions lie at residues 40-43 (DSMQ) and 164-168 (QRIVR).

Belongs to the IPP transferase family. Monomer. It depends on Mg(2+) as a cofactor.

It carries out the reaction adenosine(37) in tRNA + dimethylallyl diphosphate = N(6)-dimethylallyladenosine(37) in tRNA + diphosphate. Catalyzes the transfer of a dimethylallyl group onto the adenine at position 37 in tRNAs that read codons beginning with uridine, leading to the formation of N6-(dimethylallyl)adenosine (i(6)A). The sequence is that of tRNA dimethylallyltransferase from Rhizobium etli (strain CIAT 652).